We begin with the raw amino-acid sequence, 235 residues long: STARD3 N-terminal-like protein (235 aa).

Met1 is subject to N-acetylmethionine. A disordered region spans residues 1-20 (MNHLPEHMENTLTGSQSSHA). At 1-53 (MNHLPEHMENTLTGSQSSHASLRDIHSINPAQLMARIESYEGREKKGISDVRR) the chain is on the cytoplasmic side. Over residues 10–20 (NTLTGSQSSHA) the composition is skewed to polar residues. Ser15, Ser21, and Ser27 each carry phosphoserine. The MENTAL domain occupies 48–218 (ISDVRRTFCL…YSPPESEAGS (171 aa)). The helical transmembrane segment at 54 to 74 (TFCLFVTFDLLFVTLLWIIEL) threads the bilayer. Over 75 to 97 (NVNGGIENTLKKEVIHYDYYSSY) the chain is Extracellular. Residues 98 to 118 (FDIFLLAVFRFKVLILGYAVC) traverse the membrane as a helical segment. The Cytoplasmic portion of the chain corresponds to 119-122 (RLRH). Residues 123–143 (WWAIALTTAVTSAFLLAKVIL) traverse the membrane as a helical segment. Residues 144-150 (SKLFSQG) lie on the Extracellular side of the membrane. A helical membrane pass occupies residues 151 to 171 (AFGYVLPIISFILAWIETWFL). Over 172-235 (DFKVLPQEAE…QESEKPLLEL (64 aa)) the chain is Cytoplasmic. A Phosphoserine modification is found at Ser193. The disordered stretch occupies residues 202–235 (GLSDGQFYSPPESEAGSEEEAEEKQESEKPLLEL). An FFAT motif is present at residues 208 to 213 (FYSPPE). The span at 225-235 (KQESEKPLLEL) shows a compositional bias: basic and acidic residues.

It belongs to the STARD3 family. As to quaternary structure, homodimer. Interacts (via the MENTAL domain) with STARD3NL. Interacts (via FFAT motif) with VAPA. Interacts (via FFAT motif) with VAPB. Interacts (via FFAT motif) with MOSPD2 (via MSP domain).

It is found in the late endosome membrane. In terms of biological role, tethering protein that creates contact site between the endoplasmic reticulum and late endosomes: localizes to late endosome membranes and contacts the endoplasmic reticulum via interaction with VAPA and VAPB. This is STARD3 N-terminal-like protein from Mus musculus (Mouse).